A 470-amino-acid polypeptide reads, in one-letter code: Histone deacetylase HOS1 (470 aa).

Positions 47 to 392 (LTFPYARKDD…YTYLTWCVTK (346 aa)) are histone deacetylase. At Ser110 the chain carries Phosphoserine. His211 is an active-site residue.

It belongs to the histone deacetylase family. HD type 1 subfamily.

The protein localises to the nucleus. It carries out the reaction N(6)-acetyl-L-lysyl-[histone] + H2O = L-lysyl-[histone] + acetate. Functionally, responsible for the deacetylation of lysine residues on the N-terminal part of the core histones (H2A, H2B, H3 and H4). Histone deacetylation plays an important role in transcriptional regulation, cell cycle progression and developmental events. Histone deacetylases act via the formation of large multiprotein complexes. This is Histone deacetylase HOS1 (HOS1) from Saccharomyces cerevisiae (strain ATCC 204508 / S288c) (Baker's yeast).